Consider the following 283-residue polypeptide: Rhomboid-like protease 2 (283 aa).

Residues 1–11 (MANIRTLSDYA) show a composition bias toward polar residues. A disordered region spans residues 1-26 (MANIRTLSDYASSPPRGSSALEGEVG). The next 3 helical transmembrane spans lie at 62–82 (IIII…AGLA), 114–134 (ICPL…WVQI), and 149–169 (LLAV…AVLF). Serine 178 serves as the catalytic Nucleophile. 4 consecutive transmembrane segments (helical) span residues 179 to 199 (TAVF…WHAI), 205 to 225 (AIIS…GSHM), 227 to 247 (SVGH…LNEN), and 260 to 280 (LTSQ…IFLV). The active site involves histidine 230.

This sequence belongs to the peptidase S54 family.

It is found in the membrane. The enzyme catalyses Cleaves type-1 transmembrane domains using a catalytic dyad composed of serine and histidine that are contributed by different transmembrane domains.. Functionally, serine protease involved in intramembrane proteolysis and the subsequent release of polypeptides from their membrane anchors. The polypeptide is Rhomboid-like protease 2 (ROM2) (Toxoplasma gondii).